The following is a 503-amino-acid chain: ATP synthase subunit alpha (503 aa).

Residue 170 to 177 (GDRQTGKT) coordinates ATP.

This sequence belongs to the ATPase alpha/beta chains family. As to quaternary structure, F-type ATPases have 2 components, CF(1) - the catalytic core - and CF(0) - the membrane proton channel. CF(1) has five subunits: alpha(3), beta(3), gamma(1), delta(1), epsilon(1). CF(0) has three main subunits: a(1), b(2) and c(9-12). The alpha and beta chains form an alternating ring which encloses part of the gamma chain. CF(1) is attached to CF(0) by a central stalk formed by the gamma and epsilon chains, while a peripheral stalk is formed by the delta and b chains.

The protein localises to the cell inner membrane. The enzyme catalyses ATP + H2O + 4 H(+)(in) = ADP + phosphate + 5 H(+)(out). Functionally, produces ATP from ADP in the presence of a proton gradient across the membrane. The alpha chain is a regulatory subunit. The protein is ATP synthase subunit alpha of Geobacter sulfurreducens (strain ATCC 51573 / DSM 12127 / PCA).